The chain runs to 79 residues: Sec-independent protein translocase protein TatA (79 aa).

Residues 1–21 (MGSFSIWHWLIVLAIVVLVFG) form a helical membrane-spanning segment. The disordered stretch occupies residues 43-79 (VKDGSTSTDTPAAAPGQVAGQTAADKTTIDVEAKQKG). Residues 69-79 (TTIDVEAKQKG) show a composition bias toward basic and acidic residues.

This sequence belongs to the TatA/E family. As to quaternary structure, the Tat system comprises two distinct complexes: a TatABC complex, containing multiple copies of TatA, TatB and TatC subunits, and a separate TatA complex, containing only TatA subunits. Substrates initially bind to the TatABC complex, which probably triggers association of the separate TatA complex to form the active translocon.

It is found in the cell inner membrane. Functionally, part of the twin-arginine translocation (Tat) system that transports large folded proteins containing a characteristic twin-arginine motif in their signal peptide across membranes. TatA could form the protein-conducting channel of the Tat system. The protein is Sec-independent protein translocase protein TatA of Delftia acidovorans (strain DSM 14801 / SPH-1).